A 79-amino-acid polypeptide reads, in one-letter code: Cell division protein ZapB (79 aa).

Residues 4–78 (EVFEKLEAKV…LRALLGKMEE (75 aa)) are a coiled coil.

This sequence belongs to the ZapB family. In terms of assembly, homodimer. The ends of the coiled-coil dimer bind to each other, forming polymers. Interacts with FtsZ.

It localises to the cytoplasm. Its function is as follows. Non-essential, abundant cell division factor that is required for proper Z-ring formation. It is recruited early to the divisome by direct interaction with FtsZ, stimulating Z-ring assembly and thereby promoting cell division earlier in the cell cycle. Its recruitment to the Z-ring requires functional FtsA or ZipA. This Erwinia tasmaniensis (strain DSM 17950 / CFBP 7177 / CIP 109463 / NCPPB 4357 / Et1/99) protein is Cell division protein ZapB.